The sequence spans 111 residues: Class I hydrophobin 10 (111 aa).

The first 17 residues, 1–17, serve as a signal peptide directing secretion; the sequence is MLFNTFVVTALASLAAA. Cystine bridges form between Cys-30–Cys-90, Cys-37–Cys-84, Cys-38–Cys-71, and Cys-91–Cys-104.

This sequence belongs to the fungal hydrophobin family. Self-assembles to form functional amyloid fibrils called rodlets. Self-assembly into fibrillar rodlets occurs spontaneously at hydrophobic:hydrophilic interfaces and the rodlets further associate laterally to form amphipathic monolayers.

It localises to the secreted. Its subcellular location is the cell wall. Aerial growth, conidiation, and dispersal of filamentous fungi in the environment rely upon a capability of their secreting small amphipathic proteins called hydrophobins (HPBs) with low sequence identity. Class I can self-assemble into an outermost layer of rodlet bundles on aerial cell surfaces, conferring cellular hydrophobicity that supports fungal growth, development and dispersal; whereas Class II form highly ordered films at water-air interfaces through intermolecular interactions but contribute nothing to the rodlet structure. This is Class I hydrophobin 10 from Pleurotus ostreatus (strain PC15) (Oyster mushroom).